Reading from the N-terminus, the 98-residue chain is Protein translation factor SUI1 homolog (98 aa).

This sequence belongs to the SUI1 family.

This Thermococcus gammatolerans (strain DSM 15229 / JCM 11827 / EJ3) protein is Protein translation factor SUI1 homolog.